A 118-amino-acid chain; its full sequence is Small ribosomal subunit protein uS13 (118 aa).

The segment at 94-118 (GLPVRGQRTKTNARTRKGPRKPIRK) is disordered.

It belongs to the universal ribosomal protein uS13 family. In terms of assembly, part of the 30S ribosomal subunit. Forms a loose heterodimer with protein S19. Forms two bridges to the 50S subunit in the 70S ribosome.

Its function is as follows. Located at the top of the head of the 30S subunit, it contacts several helices of the 16S rRNA. In the 70S ribosome it contacts the 23S rRNA (bridge B1a) and protein L5 of the 50S subunit (bridge B1b), connecting the 2 subunits; these bridges are implicated in subunit movement. Contacts the tRNAs in the A and P-sites. This is Small ribosomal subunit protein uS13 from Marinobacter nauticus (strain ATCC 700491 / DSM 11845 / VT8) (Marinobacter aquaeolei).